We begin with the raw amino-acid sequence, 347 residues long: Phosphoribosylformylglycinamidine cyclo-ligase (347 aa).

This sequence belongs to the AIR synthase family.

The protein localises to the cytoplasm. The catalysed reaction is 2-formamido-N(1)-(5-O-phospho-beta-D-ribosyl)acetamidine + ATP = 5-amino-1-(5-phospho-beta-D-ribosyl)imidazole + ADP + phosphate + H(+). Its pathway is purine metabolism; IMP biosynthesis via de novo pathway; 5-amino-1-(5-phospho-D-ribosyl)imidazole from N(2)-formyl-N(1)-(5-phospho-D-ribosyl)glycinamide: step 2/2. The protein is Phosphoribosylformylglycinamidine cyclo-ligase of Syntrophus aciditrophicus (strain SB).